A 41-amino-acid chain; its full sequence is Large ribosomal subunit protein bL36 (41 aa).

The protein belongs to the bacterial ribosomal protein bL36 family.

The polypeptide is Large ribosomal subunit protein bL36 (Rhizobium rhizogenes (strain K84 / ATCC BAA-868) (Agrobacterium radiobacter)).